The chain runs to 597 residues: Sodium/mannose cotransporter SLC5A10 (597 aa).

The Extracellular segment spans residues 1-16 (MAVDNSTSDAHTPGRQ). N-linked (GlcNAc...) asparagine glycosylation is present at asparagine 5. Residues 17 to 37 (LTVVDIAIIAVYFALNVAVGI) traverse the membrane as a helical segment. Topologically, residues 38-73 (WSSCRASRNTVRGYFLAGRDMTWWPIGASLFASSEG) are cytoplasmic. The chain crosses the membrane as a helical span at residues 74–94 (SGLFIGLAGSGAAGGLAVAGF). Topologically, residues 95–100 (EWNATY) are extracellular. Asparagine 97 is a glycosylation site (N-linked (GlcNAc...) asparagine). A helical transmembrane segment spans residues 101-121 (VLLALAWVFVPIYLSSEIVTM). Residues 122-139 (PEYMQKRYGGQRIRMYLS) are Cytoplasmic-facing. The chain crosses the membrane as a helical span at residues 140 to 162 (VLSLLLSVFTKISIDLYAGALFV). Residues 163–174 (HICLGWNFYLST) lie on the Extracellular side of the membrane. The chain crosses the membrane as a helical span at residues 175-195 (VIMLAITALYTIAGGLTAVIY). Residues 196–201 (TDALQT) lie on the Cytoplasmic side of the membrane. The chain crosses the membrane as a helical span at residues 202 to 222 (LVMVAGAVILTIKAFEQIGGY). The Extracellular portion of the chain corresponds to 223–265 (EQLAEAYAQAVPSRTISNTTCHVPRADAMHMFRDPYTADLPWT). A helical transmembrane segment spans residues 266 to 286 (GMTFGLTIMAAWYWCTDQVIV). At 287 to 301 (QRSLSARDLNHAKGG) the chain is on the cytoplasmic side. A helical membrane pass occupies residues 302–322 (SILASYLKMLPMGLMVMPGMI). Residues 323–367 (SRVLFPDDVGCVVPAECLRACGAEIGCSNIAYPKLVMELMPTGLR) are Extracellular-facing. A helical transmembrane segment spans residues 368–388 (GLMVAVMMAALMSSLTSIFNS). At 389 to 410 (SSTLFTMDIWRRLRPRAGEREL) the chain is on the cytoplasmic side. The chain crosses the membrane as a helical span at residues 411-431 (LLVGRLVIVVLVGVSVAWIPV). At 432–444 (LQGSNGGQLFIYM) the chain is on the extracellular side. Residues 445 to 465 (QSVTSSLAPPVTAVFVLGIFW) form a helical membrane-spanning segment. The Cytoplasmic portion of the chain corresponds to 466 to 472 (RRANEQG). Residues 473 to 493 (AFWGLMAGLAVGATRLVLEFL) form a helical membrane-spanning segment. Residues 494-514 (HPAPPCGHPDTRPPILHGVHY) are Extracellular-facing. A helical transmembrane segment spans residues 515-535 (LHFAVALFLLSGAVVVAGSLL). The Cytoplasmic portion of the chain corresponds to 536 to 576 (TPHPQGVQIQSLTWWTLAQDLPLGVKTGDGRASQRHAFWAR). The helical transmembrane segment at 577–597 (VCGVNAILLMCVNIFFYTYFA) threads the bilayer.

Belongs to the sodium:solute symporter (SSF) (TC 2.A.21) family. Predominantyl expressed in kidney. Also detected at very low levels in testes, skeletal muscle, and spleen.

It is found in the apical cell membrane. It catalyses the reaction D-mannose(out) + Na(+)(out) = D-mannose(in) + Na(+)(in). It carries out the reaction D-fructopyranose(out) + Na(+)(out) = D-fructopyranose(in) + Na(+)(in). Electrogenic Na+-coupled sugar symporter that actively transports D-mannose or D-fructose at the plasma membrane, with a Na+ to sugar coupling ratio of 1:1. Transporter activity is driven by a transmembrane Na+ electrochemical gradient set by the Na+/K+ pump. Exclusively recognizes sugar substrates having a pyranose ring with an axial hydroxyl group on carbon 2. Has likely evolved to enable renal reabsorption of D-mannose, an important constituent of oligosaccharide chains of glycoproteins. Contributes to dietary D-fructose reabsorption from glomerular filtrate across the brush border of the kidney. In Bos taurus (Bovine), this protein is Sodium/mannose cotransporter SLC5A10 (SLC5A10).